Reading from the N-terminus, the 293-residue chain is Formamidopyrimidine-DNA glycosylase (293 aa).

The active-site Schiff-base intermediate with DNA is Pro2. Glu3 serves as the catalytic Proton donor. Catalysis depends on Lys58, which acts as the Proton donor; for beta-elimination activity. 3 residues coordinate DNA: His104, Arg123, and Lys166. The FPG-type zinc finger occupies 257–293 (KVYDREGETCKTPACGGTIKRFTQNGRSTFWCPKCQK). Arg283 serves as the catalytic Proton donor; for delta-elimination activity.

Belongs to the FPG family. Monomer. The cofactor is Zn(2+).

It catalyses the reaction Hydrolysis of DNA containing ring-opened 7-methylguanine residues, releasing 2,6-diamino-4-hydroxy-5-(N-methyl)formamidopyrimidine.. It carries out the reaction 2'-deoxyribonucleotide-(2'-deoxyribose 5'-phosphate)-2'-deoxyribonucleotide-DNA = a 3'-end 2'-deoxyribonucleotide-(2,3-dehydro-2,3-deoxyribose 5'-phosphate)-DNA + a 5'-end 5'-phospho-2'-deoxyribonucleoside-DNA + H(+). Functionally, involved in base excision repair of DNA damaged by oxidation or by mutagenic agents. Acts as a DNA glycosylase that recognizes and removes damaged bases. Has a preference for oxidized purines, such as 7,8-dihydro-8-oxoguanine (8-oxoG). Has AP (apurinic/apyrimidinic) lyase activity and introduces nicks in the DNA strand. Cleaves the DNA backbone by beta-delta elimination to generate a single-strand break at the site of the removed base with both 3'- and 5'-phosphates. The polypeptide is Formamidopyrimidine-DNA glycosylase (Bradyrhizobium diazoefficiens (strain JCM 10833 / BCRC 13528 / IAM 13628 / NBRC 14792 / USDA 110)).